The chain runs to 176 residues: Dual-action ribosomal maturation protein DarP (176 aa).

The segment covering 1–16 (MRLIDPDADLEFDPDS) has biased composition (acidic residues). A disordered region spans residues 1–29 (MRLIDPDADLEFDPDSVYDGPSKSQKKRE).

This sequence belongs to the DarP family.

The protein resides in the cytoplasm. Member of a network of 50S ribosomal subunit biogenesis factors which assembles along the 30S-50S interface, preventing incorrect 23S rRNA structures from forming. Promotes peptidyl transferase center (PTC) maturation. The polypeptide is Dual-action ribosomal maturation protein DarP (Thiobacillus denitrificans (strain ATCC 25259 / T1)).